Here is a 386-residue protein sequence, read N- to C-terminus: S-(hydroxymethyl)glutathione dehydrogenase (386 aa).

The residue at position 2 (S2) is an N-acetylserine. Residue C49 participates in Zn(2+) binding. An NAD(+)-binding site is contributed by H50. Zn(2+) contacts are provided by H71, E72, C101, C104, C107, C115, and C179. NAD(+) is bound by residues G204–G209, D228, I300–V302, and S325–F327.

The protein belongs to the zinc-containing alcohol dehydrogenase family. Class-III subfamily. Zn(2+) is required as a cofactor.

The protein localises to the cytoplasm. It localises to the mitochondrion. The catalysed reaction is a primary alcohol + NAD(+) = an aldehyde + NADH + H(+). It catalyses the reaction a secondary alcohol + NAD(+) = a ketone + NADH + H(+). The enzyme catalyses S-(hydroxymethyl)glutathione + NADP(+) = S-formylglutathione + NADPH + H(+). It carries out the reaction S-(hydroxymethyl)glutathione + NAD(+) = S-formylglutathione + NADH + H(+). The catalysed reaction is S-nitrosoglutathione + NADH + H(+) = S-(hydroxysulfenamide)glutathione + NAD(+). In terms of biological role, oxidizes long-chain alcohols and, in the presence of glutathione, is able to oxidize formaldehyde. Is responsible for yeast resistance to formaldehyde. Also acts as a S-nitroso-glutathione reductase by catalyzing the NADH-dependent reduction of S-nitrosoglutathione, thereby regulating protein S-nitrosylation. The protein is S-(hydroxymethyl)glutathione dehydrogenase (SFA1) of Saccharomyces cerevisiae (strain ATCC 204508 / S288c) (Baker's yeast).